The chain runs to 244 residues: 5-oxoprolinase subunit A (244 aa).

Belongs to the LamB/PxpA family. Forms a complex composed of PxpA, PxpB and PxpC.

It carries out the reaction 5-oxo-L-proline + ATP + 2 H2O = L-glutamate + ADP + phosphate + H(+). Catalyzes the cleavage of 5-oxoproline to form L-glutamate coupled to the hydrolysis of ATP to ADP and inorganic phosphate. This Shigella dysenteriae serotype 1 (strain Sd197) protein is 5-oxoprolinase subunit A.